A 582-amino-acid chain; its full sequence is ATP-dependent lipid A-core flippase (582 aa).

A run of 5 helical transmembrane segments spans residues 26-46 (LIAASVALILNALVDSSLIYL), 68-88 (ILVMLFILLRGVSNYIASYCL), 140-160 (YVLVTIVREGAYLISLFAVMV), 164-184 (WQLSIVLFLLAPIIAFLISIV), and 252-272 (GLVQLIASLALSAVLYVATFP). The ABC transmembrane type-1 domain occupies 27-310 (IAASVALILN…LTSVNSQFQR (284 aa)). The ABC transporter domain maps to 342–578 (ITFDNVIFSY…GGAYKQLYSM (237 aa)). Residue 376–383 (GRSGSGKS) coordinates ATP.

It belongs to the ABC transporter superfamily. Lipid exporter (TC 3.A.1.106) family. Homodimer.

It localises to the cell inner membrane. It carries out the reaction ATP + H2O + lipid A-core oligosaccharideSide 1 = ADP + phosphate + lipid A-core oligosaccharideSide 2.. Its function is as follows. Involved in lipopolysaccharide (LPS) biosynthesis. Translocates lipid A-core from the inner to the outer leaflet of the inner membrane. Transmembrane domains (TMD) form a pore in the inner membrane and the ATP-binding domain (NBD) is responsible for energy generation. This Haemophilus ducreyi (strain 35000HP / ATCC 700724) protein is ATP-dependent lipid A-core flippase.